The chain runs to 224 residues: Ribonuclease 3 (224 aa).

The 123-residue stretch at 4-126 (LDRLQHKIGY…IIGAMSLDSN (123 aa)) folds into the RNase III domain. Glu39 provides a ligand contact to Mg(2+). Asp43 is an active-site residue. Asp112 and Glu115 together coordinate Mg(2+). Glu115 is an active-site residue. The DRBM domain maps to 153 to 223 (DPKTRLQEYL…AEQILKVLDI (71 aa)).

Belongs to the ribonuclease III family. In terms of assembly, homodimer. The cofactor is Mg(2+).

It is found in the cytoplasm. The catalysed reaction is Endonucleolytic cleavage to 5'-phosphomonoester.. In terms of biological role, digests double-stranded RNA. Involved in the processing of primary rRNA transcript to yield the immediate precursors to the large and small rRNAs (23S and 16S). Processes some mRNAs, and tRNAs when they are encoded in the rRNA operon. Processes pre-crRNA and tracrRNA of type II CRISPR loci if present in the organism. The polypeptide is Ribonuclease 3 (Actinobacillus succinogenes (strain ATCC 55618 / DSM 22257 / CCUG 43843 / 130Z)).